The chain runs to 537 residues: Beta-1-syntrophin (537 aa).

Ala-2 is subject to N-acetylalanine. 2 consecutive PH domains span residues 18-297 and 321-432; these read RAQR…SNAG and EIRH…QGCH. A phosphoserine mark is found at Ser-86, Ser-125, and Ser-204. The PDZ domain maps to 111 to 194; the sequence is GVKVLKQELG…EVLLEVKYMR (84 aa). Positions 204-233 are disordered; sequence SPVSEIGWETPPPESPRLGGGSAEPLSSQS. Thr-213 bears the Phosphothreonine mark. Ser-218, Ser-225, Ser-231, Ser-235, and Ser-388 each carry phosphoserine. The region spanning 481–537 is the SU domain; it reads PYEKLKMSSDDGIRMLYLDFGGKEGEIQLDLHSCPKPIVFIIHSFLSAKITRLGLVA. A calmodulin-binding region spans residues 517 to 537; it reads PIVFIIHSFLSAKITRLGLVA.

Belongs to the syntrophin family. Monomer and homodimer. Interacts with the viral HTLV-1 TAX protein and other members of the syntrophin family: SNTA1 and SNTB2. Interacts with the dystrophin protein DMD and related proteins DTNA and UTRN and with the sodium channel proteins SCN4A and SCN5A. Interacts with DTNB. Post-translationally, phosphorylated by CaM-kinase II. Ubiquitous. Expressed at high levels in the liver.

The protein resides in the cell membrane. Its subcellular location is the sarcolemma. It localises to the cell junction. It is found in the cytoplasm. The protein localises to the cytoskeleton. In terms of biological role, adapter protein that binds to and probably organizes the subcellular localization of a variety of membrane proteins. May link various receptors to the actin cytoskeleton and the dystrophin glycoprotein complex. This is Beta-1-syntrophin (Sntb1) from Mus musculus (Mouse).